A 156-amino-acid chain; its full sequence is Cyanate hydratase (156 aa).

Active-site residues include R96, E99, and S122.

This sequence belongs to the cyanase family.

It catalyses the reaction cyanate + hydrogencarbonate + 3 H(+) = NH4(+) + 2 CO2. In terms of biological role, catalyzes the reaction of cyanate with bicarbonate to produce ammonia and carbon dioxide. The chain is Cyanate hydratase from Burkholderia pseudomallei (strain 1106a).